Here is a 276-residue protein sequence, read N- to C-terminus: Release factor glutamine methyltransferase (276 aa).

S-adenosyl-L-methionine contacts are provided by residues 116–120, Asp-139, Trp-167, and Asn-182; that span reads GTGTG. 182–185 lines the substrate pocket; the sequence is NPPY.

It belongs to the protein N5-glutamine methyltransferase family. PrmC subfamily.

It catalyses the reaction L-glutaminyl-[peptide chain release factor] + S-adenosyl-L-methionine = N(5)-methyl-L-glutaminyl-[peptide chain release factor] + S-adenosyl-L-homocysteine + H(+). Its function is as follows. Methylates the class 1 translation termination release factors RF1/PrfA and RF2/PrfB on the glutamine residue of the universally conserved GGQ motif. The chain is Release factor glutamine methyltransferase from Pseudomonas aeruginosa (strain ATCC 15692 / DSM 22644 / CIP 104116 / JCM 14847 / LMG 12228 / 1C / PRS 101 / PAO1).